The sequence spans 780 residues: Protein phosphatase 1 regulatory subunit 21 (780 aa).

2 coiled-coil regions span residues 1-207 and 556-607; these read MASA…LKTL and ESRE…LKNT. The interval 84–104 is disordered; the sequence is EPRGKKNKKSGESSSQLSQEQ. The segment covering 95 to 104 has biased composition (low complexity); the sequence is ESSSQLSQEQ. Threonine 652 carries the phosphothreonine modification. A coiled-coil region spans residues 693–742; the sequence is YAECRALSKRLALAEKSKEALTEEMKLASQNISRLQDELTTTKRSYEDQL. Positions 760–780 are disordered; that stretch reads REEIDTLKMSSKGNSKKNKSR.

As to quaternary structure, component of the FERRY complex, composed of five subunits: TBCK, PPP1R21, FERRY3, CRYZL1 and GATAD1, with a ratio of 1:2:1:2:4 respectively. PPP1R21 serves as a binding hub connecting all five complex subunits to mediate the binding to specific mitochondrial mRNAs. Interacts with the GTP-bound form of RAB5A (via its C-terminal region); linking the mRNP complex onto trafficking endosomes for active mRNA transport. Interacts with PPP1CA.

It is found in the early endosome. Its function is as follows. Component of the FERRY complex (Five-subunit Endosomal Rab5 and RNA/ribosome intermediary). The FERRY complex directly interacts with mRNAs and RAB5A, and functions as a RAB5A effector involved in the localization and the distribution of specific mRNAs most likely by mediating their endosomal transport. The complex recruits mRNAs and ribosomes to early endosomes through direct mRNA-interaction. In the complex, PPP1R21 serves as a binding hub connecting all five complex subunits and mediating the binding to mRNA and early endosomes via RAB5A. Putative regulator of protein phosphatase 1 (PP1) activity. May play a role in the endosomal sorting process or in endosome maturation pathway. This Homo sapiens (Human) protein is Protein phosphatase 1 regulatory subunit 21 (PPP1R21).